The primary structure comprises 290 residues: METVLDSNILPVGKPKWLKVKLPIGQKYTELRGLVDKYKLNTICTSGSCPNMGECWGEGTATFMILGNICTRSCGFCGVKTGRPETVDWDEPEKVARSIKIMNIKHAVITSVDRDDLKDMGSIIWIETVKAIRRMNPETTLETLIPDFQGVERNLDRIVAANPEVVSHNVETVRRLTREVRIQAKYDKSLEVLRYLKAKGIKRTKSGIMLGLGETEEEVIQTMRDLREANVDIVTIGQYLQPSKKHLPVKEFITPEQFEKYELLGKEMGFRHVESGPLVRSSYHAQKHIL.

[4Fe-4S] cluster contacts are provided by C44, C49, C55, C70, C74, C77, and S282. The 216-residue stretch at 56–271 (WGEGTATFMI…ELLGKEMGFR (216 aa)) folds into the Radical SAM core domain.

It belongs to the radical SAM superfamily. Lipoyl synthase family. Requires [4Fe-4S] cluster as cofactor.

Its subcellular location is the cytoplasm. It carries out the reaction [[Fe-S] cluster scaffold protein carrying a second [4Fe-4S](2+) cluster] + N(6)-octanoyl-L-lysyl-[protein] + 2 oxidized [2Fe-2S]-[ferredoxin] + 2 S-adenosyl-L-methionine + 4 H(+) = [[Fe-S] cluster scaffold protein] + N(6)-[(R)-dihydrolipoyl]-L-lysyl-[protein] + 4 Fe(3+) + 2 hydrogen sulfide + 2 5'-deoxyadenosine + 2 L-methionine + 2 reduced [2Fe-2S]-[ferredoxin]. Its pathway is protein modification; protein lipoylation via endogenous pathway; protein N(6)-(lipoyl)lysine from octanoyl-[acyl-carrier-protein]: step 2/2. Catalyzes the radical-mediated insertion of two sulfur atoms into the C-6 and C-8 positions of the octanoyl moiety bound to the lipoyl domains of lipoate-dependent enzymes, thereby converting the octanoylated domains into lipoylated derivatives. The polypeptide is Lipoyl synthase (Flavobacterium psychrophilum (strain ATCC 49511 / DSM 21280 / CIP 103535 / JIP02/86)).